The sequence spans 809 residues: Quinate/shikimate dehydrogenase (quinone) (809 aa).

Transmembrane regions (helical) follow at residues 14-34, 41-61, 68-88, 90-110, and 127-147; these read VWCF…VIGG, GGSW…FFMF, VWLY…DAGF, FWPL…VMLT, and AYVI…GMFI.

This sequence belongs to the bacterial PQQ dehydrogenase family. Pyrroloquinoline quinone serves as cofactor.

The protein localises to the cell membrane. It carries out the reaction L-quinate + a quinone = 3-dehydroquinate + a quinol. The enzyme catalyses shikimate + a quinone = 3-dehydroshikimate + a quinol. It functions in the pathway aromatic compound metabolism; 3,4-dihydroxybenzoate biosynthesis; 3-dehydroquinate from D-quinate (PQQ route): step 1/1. Its function is as follows. Can act either on quinate or on shikimate. The protein is Quinate/shikimate dehydrogenase (quinone) (quiA) of Acinetobacter baylyi (strain ATCC 33305 / BD413 / ADP1).